The sequence spans 340 residues: Biotin synthase (340 aa).

The Radical SAM core domain occupies 56-283; that stretch reads NAVQLSTLLS…KAVVRLSAGR (228 aa). Residues cysteine 71, cysteine 75, and cysteine 78 each contribute to the [4Fe-4S] cluster site. 4 residues coordinate [2Fe-2S] cluster: cysteine 115, cysteine 146, cysteine 206, and arginine 278.

Belongs to the radical SAM superfamily. Biotin synthase family. As to quaternary structure, homodimer. The cofactor is [4Fe-4S] cluster. [2Fe-2S] cluster is required as a cofactor.

It catalyses the reaction (4R,5S)-dethiobiotin + (sulfur carrier)-SH + 2 reduced [2Fe-2S]-[ferredoxin] + 2 S-adenosyl-L-methionine = (sulfur carrier)-H + biotin + 2 5'-deoxyadenosine + 2 L-methionine + 2 oxidized [2Fe-2S]-[ferredoxin]. It participates in cofactor biosynthesis; biotin biosynthesis; biotin from 7,8-diaminononanoate: step 2/2. Catalyzes the conversion of dethiobiotin (DTB) to biotin by the insertion of a sulfur atom into dethiobiotin via a radical-based mechanism. The protein is Biotin synthase of Burkholderia lata (strain ATCC 17760 / DSM 23089 / LMG 22485 / NCIMB 9086 / R18194 / 383).